The primary structure comprises 144 residues: Large ribosomal subunit protein uL13 (144 aa).

The protein belongs to the universal ribosomal protein uL13 family. As to quaternary structure, part of the 50S ribosomal subunit.

This protein is one of the early assembly proteins of the 50S ribosomal subunit, although it is not seen to bind rRNA by itself. It is important during the early stages of 50S assembly. The polypeptide is Large ribosomal subunit protein uL13 (Desulfovibrio desulfuricans (strain ATCC 27774 / DSM 6949 / MB)).